Reading from the N-terminus, the 578-residue chain is Proline--tRNA ligase (578 aa).

The protein belongs to the class-II aminoacyl-tRNA synthetase family. ProS type 1 subfamily. Homodimer.

It localises to the cytoplasm. The catalysed reaction is tRNA(Pro) + L-proline + ATP = L-prolyl-tRNA(Pro) + AMP + diphosphate. Functionally, catalyzes the attachment of proline to tRNA(Pro) in a two-step reaction: proline is first activated by ATP to form Pro-AMP and then transferred to the acceptor end of tRNA(Pro). As ProRS can inadvertently accommodate and process non-cognate amino acids such as alanine and cysteine, to avoid such errors it has two additional distinct editing activities against alanine. One activity is designated as 'pretransfer' editing and involves the tRNA(Pro)-independent hydrolysis of activated Ala-AMP. The other activity is designated 'posttransfer' editing and involves deacylation of mischarged Ala-tRNA(Pro). The misacylated Cys-tRNA(Pro) is not edited by ProRS. The sequence is that of Proline--tRNA ligase from Burkholderia cenocepacia (strain HI2424).